The chain runs to 1627 residues: Formin-like protein 5 (1627 aa).

The 190-residue stretch at 5–194 folds into the Phosphatase tensin-type domain; the sequence is RKFFLKKTPD…HYITRQGSGP (190 aa). The active-site Phosphocysteine intermediate is the C127. A C2 tensin-type domain is found at 200-337; the sequence is SRPLILDSIV…FRAEVVFSDP (138 aa). Disordered stretches follow at residues 370 to 413, 680 to 787, 801 to 1181, 1241 to 1261, and 1571 to 1627; these read EAEE…LEKH, TKRE…YDSS, KFNV…RGVV, AAVP…SLGS, and KQAE…KDVG. Basic and acidic residues-rich tracts occupy residues 402-413, 681-691, 700-717, and 726-742; these read VSREDSGSLEKH, KREESGGRRDV, IEAR…RQIP, and MPVD…EKLG. Pro residues-rich tracts occupy residues 824-835, 852-870, 877-886, 897-908, 931-965, and 974-1168; these read APPPPPPPPPPY, QPPP…PPPA, IPPPPPPPPL, VPPPPPPPPPPR, ISPP…PPSA, and APPP…PPGG. Residues 1188-1588 enclose the FH2 domain; it reads FGAAAARKST…RAEKEAEAEK (401 aa). Basic and acidic residues-rich tracts occupy residues 1248–1261 and 1571–1590; these read DSSK…SLGS and KQAE…EKSK. Polar residues predominate over residues 1600–1611; that stretch reads KPSNPSRQVKQT. Residues 1612–1627 show a composition bias toward basic and acidic residues; the sequence is PDTKTRAASRRGKDVG.

It belongs to the formin-like family. Class-II subfamily.

This is Formin-like protein 5 (FH5) from Oryza sativa subsp. japonica (Rice).